The primary structure comprises 154 residues: Fluoride-specific ion channel FluC 1 (154 aa).

The next 4 membrane-spanning stretches (helical) occupy residues 28 to 48, 59 to 79, 91 to 111, and 124 to 144; these read VVAVVALGGGTGAAARYAASL, WTTFGVNAVGCAVIGVFMVVI, PFFGTGVLGGFTTFSTYAVDS, and LAYLAATPLAALTAVWLAAWA. Residues glycine 99 and threonine 102 each coordinate Na(+).

The protein belongs to the fluoride channel Fluc/FEX (TC 1.A.43) family.

Its subcellular location is the cell membrane. It carries out the reaction fluoride(in) = fluoride(out). Its activity is regulated as follows. Na(+) is not transported, but it plays an essential structural role and its presence is essential for fluoride channel function. Fluoride-specific ion channel. Important for reducing fluoride concentration in the cell, thus reducing its toxicity. The sequence is that of Fluoride-specific ion channel FluC 1 from Streptomyces coelicolor (strain ATCC BAA-471 / A3(2) / M145).